The chain runs to 427 residues: Homoserine O-acetyltransferase FUB5 (427 aa).

Over residues 1–13 the composition is skewed to low complexity; the sequence is MTTTTTAPALPTP. The segment at 1 to 35 is disordered; it reads MTTTTTAPALPTPIHDGLGNGTTYERSIPRPVNPF. An AB hydrolase-1 domain is found at 77 to 400; the sequence is NVMIICHALS…VSDDGHDAFL (324 aa). Catalysis depends on Ser-175, which acts as the Nucleophile. The disordered stretch occupies residues 260–297; sequence RFGRDTGNKKKAKNKGSETLPSNSTPIHSQGGADETPV. Polar residues predominate over residues 276 to 287; that stretch reads SETLPSNSTPIH. Catalysis depends on residues Asp-367 and His-396.

This sequence belongs to the AB hydrolase superfamily. MetX family.

It catalyses the reaction L-homoserine + acetyl-CoA = O-acetyl-L-homoserine + CoA. It functions in the pathway mycotoxin biosynthesis. Its function is as follows. Homoserine O-acetyltransferase; part of the gene cluster that mediates the biosynthesis of fusaric acid, a mycotoxin with low to moderate toxicity to animals and humans, but with high phytotoxic properties. L-aspartate is suggested as fusaric acid amino acid precursor that is activated and further processed to O-acetyl-L-homoserine by cluster enzymes aspartate kinase FUB3 and homoserine O-acetyltransferase FUB5, as well as enzymes of the primary metabolism. The polyketide synthase (PKS) FUB1 generates the triketide trans-2-hexenal which is presumptively released by the hydrolase FUB4 and linked to the NRPS-bound amino acid precursor by NAD(P)-dependent dehydrogenase FUB6. FUB1, FUB4, and the non-canonical NRPS Fub8 may form an enzyme complex. Further processing of the NRPS-bound intermediate might be carried out by FUB6 and the sulfhydrylase FUB7, enabling a spontaneous electrocyclization to close the carbon backbone of fusaric acid. Dihydrofusaric acid is likely to be released via reduction by the thioester reductase (TR) domain of FUB8 whereupon the final oxidation to fusaric acid may (also) be performed by the FMN-dependent dehydrogenase FUB9. The chain is Homoserine O-acetyltransferase FUB5 from Gibberella fujikuroi (strain CBS 195.34 / IMI 58289 / NRRL A-6831) (Bakanae and foot rot disease fungus).